A 157-amino-acid polypeptide reads, in one-letter code: Small ribosomal subunit protein uS7 (157 aa).

It belongs to the universal ribosomal protein uS7 family. As to quaternary structure, part of the 30S ribosomal subunit. Contacts proteins S9 and S11.

Functionally, one of the primary rRNA binding proteins, it binds directly to 16S rRNA where it nucleates assembly of the head domain of the 30S subunit. Is located at the subunit interface close to the decoding center, probably blocks exit of the E-site tRNA. In Albidiferax ferrireducens (strain ATCC BAA-621 / DSM 15236 / T118) (Rhodoferax ferrireducens), this protein is Small ribosomal subunit protein uS7.